Here is an 800-residue protein sequence, read N- to C-terminus: Phenylalanine--tRNA ligase beta subunit (800 aa).

One can recognise a tRNA-binding domain in the interval 39–154 (TKDIKNLVVG…EAQVPGTDAL (116 aa)). A B5 domain is found at 408–483 (AFITPIDITA…RIYGYDDIPS (76 aa)). Residues D461, D467, E470, and E471 each contribute to the Mg(2+) site. The FDX-ACB domain maps to 708–800 (PRFPGMSRDI…ALIEQGAVIR (93 aa)).

Belongs to the phenylalanyl-tRNA synthetase beta subunit family. Type 1 subfamily. As to quaternary structure, tetramer of two alpha and two beta subunits. Mg(2+) is required as a cofactor.

Its subcellular location is the cytoplasm. The enzyme catalyses tRNA(Phe) + L-phenylalanine + ATP = L-phenylalanyl-tRNA(Phe) + AMP + diphosphate + H(+). The polypeptide is Phenylalanine--tRNA ligase beta subunit (Staphylococcus aureus (strain USA300)).